The following is a 258-amino-acid chain: Imidazole glycerol phosphate synthase subunit HisF (258 aa).

Catalysis depends on residues D11 and D130.

It belongs to the HisA/HisF family. Heterodimer of HisH and HisF.

Its subcellular location is the cytoplasm. It carries out the reaction 5-[(5-phospho-1-deoxy-D-ribulos-1-ylimino)methylamino]-1-(5-phospho-beta-D-ribosyl)imidazole-4-carboxamide + L-glutamine = D-erythro-1-(imidazol-4-yl)glycerol 3-phosphate + 5-amino-1-(5-phospho-beta-D-ribosyl)imidazole-4-carboxamide + L-glutamate + H(+). The protein operates within amino-acid biosynthesis; L-histidine biosynthesis; L-histidine from 5-phospho-alpha-D-ribose 1-diphosphate: step 5/9. Its function is as follows. IGPS catalyzes the conversion of PRFAR and glutamine to IGP, AICAR and glutamate. The HisF subunit catalyzes the cyclization activity that produces IGP and AICAR from PRFAR using the ammonia provided by the HisH subunit. This Escherichia coli O7:K1 (strain IAI39 / ExPEC) protein is Imidazole glycerol phosphate synthase subunit HisF.